Here is a 324-residue protein sequence, read N- to C-terminus: Probable cell division protein WhiA (324 aa).

The H-T-H motif DNA-binding region spans 275 to 308 (SLEELGALADPPLTKDAIAGRIRRLIAMADRRAD).

It belongs to the WhiA family.

Functionally, involved in cell division and chromosome segregation. The polypeptide is Probable cell division protein WhiA (Acidothermus cellulolyticus (strain ATCC 43068 / DSM 8971 / 11B)).